Consider the following 231-residue polypeptide: 2-C-methyl-D-erythritol 4-phosphate cytidylyltransferase (231 aa).

Belongs to the IspD/TarI cytidylyltransferase family. IspD subfamily.

It catalyses the reaction 2-C-methyl-D-erythritol 4-phosphate + CTP + H(+) = 4-CDP-2-C-methyl-D-erythritol + diphosphate. Its pathway is isoprenoid biosynthesis; isopentenyl diphosphate biosynthesis via DXP pathway; isopentenyl diphosphate from 1-deoxy-D-xylulose 5-phosphate: step 2/6. In terms of biological role, catalyzes the formation of 4-diphosphocytidyl-2-C-methyl-D-erythritol from CTP and 2-C-methyl-D-erythritol 4-phosphate (MEP). The polypeptide is 2-C-methyl-D-erythritol 4-phosphate cytidylyltransferase (Xylella fastidiosa (strain M23)).